A 233-amino-acid chain; its full sequence is MNKILLQCDNLCKRYQEGTVQTDVLHDISFSIGEGEMMAIVGSSGSGKSTLLHLLGGLDTPTSGDVIFSGQPMSKLSSAAKAELRNQKLGFIYQFHHLLPDFTALENVAMPLLIGKKKPAEIDARAREMLHAVGLEHRATHRPSELSGGERQRVAIARALVNNPRLVLADEPTGNLDARNADSIFELLGELNRLQGTAFLVVTHDLQLAKRMSRQLEMRDGRLTAELSLMGAE.

One can recognise an ABC transporter domain in the interval 6-233 (LQCDNLCKRY…TAELSLMGAE (228 aa)). Residue 42–49 (GSSGSGKS) participates in ATP binding.

It belongs to the ABC transporter superfamily. Lipoprotein translocase (TC 3.A.1.125) family. In terms of assembly, the complex is composed of two ATP-binding proteins (LolD) and two transmembrane proteins (LolC and LolE).

The protein localises to the cell inner membrane. Part of the ABC transporter complex LolCDE involved in the translocation of mature outer membrane-directed lipoproteins, from the inner membrane to the periplasmic chaperone, LolA. Responsible for the formation of the LolA-lipoprotein complex in an ATP-dependent manner. This Salmonella choleraesuis (strain SC-B67) protein is Lipoprotein-releasing system ATP-binding protein LolD.